The following is a 450-amino-acid chain: Solute carrier family 52, riboflavin transporter, member 2 (450 aa).

5 helical membrane-spanning segments follow: residues 14-34 (LLVALFGMGSWIAVNGIWVEL), 47-67 (LPSYLSVLVALGNLGLLLVTL), 79-99 (IPIQVVQGLSIVGTGLLAPLW), 114-136 (FLTLAFVLALSCCASNVTFLPFL), and 147-167 (FFLGQGLSALLPCVLALAQGV). N-linked (GlcNAc...) asparagine glycosylation occurs at N178. The chain crosses the membrane as a helical span at residues 201–221 (FFWVLTALLGTSAAAFQGLLL). The segment at 230–268 (ATMGTGLRVETPGTEEEEEEEEASPLQEPPGQVASIVSS) is disordered. Residues 242–252 (GTEEEEEEEEA) show a composition bias toward acidic residues. A run of 5 helical transmembrane segments spans residues 282–302 (ACLLGLLAITNALTNGVLPAV), 317–337 (LAVVLGSSANPLACFLAMAVL), 344–364 (LYGLCLLGMFFGTYLMTLAVL), 371–391 (VGTSAGVVLVVLSWVLCAGVF), and 409–429 (ALLAAGVAIQVGSLLGAIAMF).

Belongs to the riboflavin transporter family. As to expression, highly expressed in the placenta and small intestine, moderately in the kidney, colon, lung, prostate, uterus, and thymus, and weakly in all other tissues.

It is found in the cell membrane. It carries out the reaction riboflavin(in) = riboflavin(out). Riboflavin transport is Na(+)-independent but moderately pH-sensitive. Activity is strongly inhibited by riboflavin analogs, such as lumiflavin. Weakly inhibited by flavin adenine dinucleotide (FAD) and flavin mononucleotide (FMN). Functionally, plasma membrane transporter mediating the uptake by cells of the water soluble vitamin B2/riboflavin that plays a key role in biochemical oxidation-reduction reactions of the carbohydrate, lipid, and amino acid metabolism. May also act as a receptor for 4-hydroxybutyrate. The polypeptide is Solute carrier family 52, riboflavin transporter, member 2 (Slc52a2) (Rattus norvegicus (Rat)).